A 419-amino-acid polypeptide reads, in one-letter code: MSAFVDAVTVEVKAGRGGNGKVAFRREAHVEFGGPAGGNGGRGGHIYFIGDEGKNTLIDLKYNRHIKAANGVHGGPKGMHGAHAEDTYVRVPLGTIVYDDKENLIGEVLEHGQTLLIAQGGKGGRGNMAFASNNNKAPDFAEQGDLGQIFLAKVELQVLADVGLLGYPNVGKSTLITRISNAKAKIADYQFTTLSPQLGMVNVEDDAFVVADLPGLIEFAHLGVGLGLQFLKHVERCRVLLHIVSMDSLDPLDDYNKINNELVLYDEKLKDRTQIVVANKMDVEGAQEKFEAFKKALKDVKVIPISALMNDGIQTLKYEIATTLKTIPKFAPKDTTKHYTLNAEDAVDFIINKGDDGVFELTGDKLFVLFNRTDFNNESAVKRFARQLRGLGIEDALREHGVVHGDIVRIFSYEFEYLE.

One can recognise an Obg domain in the interval 2–159; the sequence is SAFVDAVTVE…FLAKVELQVL (158 aa). In terms of domain architecture, OBG-type G spans 160-325; that stretch reads ADVGLLGYPN…LKYEIATTLK (166 aa). Residues 166–173, 191–195, 212–215, 279–282, and 306–308 each bind GTP; these read GYPNVGKS, FTTLS, DLPG, NKMD, and SAL. The Mg(2+) site is built by Ser-173 and Thr-193. The 79-residue stretch at 341–419 folds into the OCT domain; that stretch reads LNAEDAVDFI…IFSYEFEYLE (79 aa).

It belongs to the TRAFAC class OBG-HflX-like GTPase superfamily. OBG GTPase family. In terms of assembly, monomer. Requires Mg(2+) as cofactor.

It localises to the cytoplasm. In terms of biological role, an essential GTPase which binds GTP, GDP and possibly (p)ppGpp with moderate affinity, with high nucleotide exchange rates and a fairly low GTP hydrolysis rate. Plays a role in control of the cell cycle, stress response, ribosome biogenesis and in those bacteria that undergo differentiation, in morphogenesis control. The protein is GTPase Obg of Acholeplasma laidlawii (strain PG-8A).